Reading from the N-terminus, the 276-residue chain is 2-dehydro-3-deoxyphosphooctonate aldolase (276 aa).

It belongs to the KdsA family.

Its subcellular location is the cytoplasm. The catalysed reaction is D-arabinose 5-phosphate + phosphoenolpyruvate + H2O = 3-deoxy-alpha-D-manno-2-octulosonate-8-phosphate + phosphate. The protein operates within carbohydrate biosynthesis; 3-deoxy-D-manno-octulosonate biosynthesis; 3-deoxy-D-manno-octulosonate from D-ribulose 5-phosphate: step 2/3. It functions in the pathway bacterial outer membrane biogenesis; lipopolysaccharide biosynthesis. The polypeptide is 2-dehydro-3-deoxyphosphooctonate aldolase (Stenotrophomonas maltophilia (strain R551-3)).